A 2163-amino-acid polypeptide reads, in one-letter code: Myosin-VIIa (2163 aa).

Residues 58 to 728 (QGVEDMISLG…HDLFLEQERD (671 aa)) form the Myosin motor domain. ATP is bound at residue 151-158 (GESGAGKT). Actin-binding stretches follow at residues 607 to 629 (LDSL…KPNE) and 707 to 721 (QLGH…AHDL). IQ domains lie at 731–753 (LTRK…RFLR), 754–783 (MRQA…GYMR), 800–822 (LRGH…EYGL), and 823–852 (KMWA…EYRR). Residues 886–914 (RLNEIERKEIEQELEERRRVEVKKNIIND) are a coiled coil. The interval 937–958 (PDSSSEAPTPHGGRETSVFNDL) is disordered. In terms of domain architecture, MyTH4 1 spans 1003–1239 (YSRKPLKHPL…PSWLELQATK (237 aa)). Positions 1244–1554 (IMLPITFMDG…YFLEGLKKRS (311 aa)) constitute an FERM 1 domain. Residues 1552-1621 (KRSKFVIALQ…PAEIVYVLPS (70 aa)) form the SH3 domain. In terms of domain architecture, MyTH4 2 spans 1697-1845 (YSREPLKQPL…PHQVEVEAIQ (149 aa)). An FERM 2 domain is found at 1851–2154 (IFHKVYFPDD…SYISLMLTNM (304 aa)).

Belongs to the TRAFAC class myosin-kinesin ATPase superfamily. Myosin family. Homodimerizes in a two headed molecule through the formation of a coiled-coil rod.

It is found in the cytoplasm. In terms of biological role, myosins are actin-based motor molecules with ATPase activity. Unconventional myosins serve in intracellular movements: can function in cells as a single-molecule cargo transporter. A very slow and high-duty-ratio motor, may be suitable for tension maintenance of actin filaments. Their highly divergent tails are presumed to bind to membranous compartments, which would be moved relative to actin filaments. Plays a key role in the formation of cellular projections and other actin-based functions required for embryonic and larval viability. Necessary for auditory transduction: plays a role in Johnston organ (JO) organization by functioning in scolopidial apical attachment and therefore to acoustic stimulus propagation from the antenna a2/a3 joint to transducing elements. This is Myosin-VIIa from Aedes aegypti (Yellowfever mosquito).